Consider the following 375-residue polypeptide: Leucoanthocyanidin dioxygenase 1 (375 aa).

Residues 218 to 317 enclose the Fe2OG dioxygenase domain; the sequence is LLLQLKINYY…RLSWVVFCEP (100 aa). Fe cation-binding residues include histidine 242, aspartate 244, and histidine 298. Arginine 308 contributes to the 2-oxoglutarate binding site.

The protein belongs to the iron/ascorbate-dependent oxidoreductase family. L-ascorbate is required as a cofactor. Fe(2+) serves as cofactor.

The catalysed reaction is a (2R,3S,4S)-leucoanthocyanidin + 2-oxoglutarate + O2 = a 4-H-anthocyanidin with a 3-hydroxy group + succinate + CO2 + 2 H2O. The protein operates within pigment biosynthesis; anthocyanin biosynthesis. Involved in anthocyanin and protoanthocyanidin biosynthesis by catalyzing the oxidation of leucoanthocyanidins into anthocyanidins. In Oryza sativa subsp. japonica (Rice), this protein is Leucoanthocyanidin dioxygenase 1.